A 75-amino-acid chain; its full sequence is UPF0270 protein PputGB1_1339 (75 aa).

It belongs to the UPF0270 family.

The sequence is that of UPF0270 protein PputGB1_1339 from Pseudomonas putida (strain GB-1).